Here is a 1299-residue protein sequence, read N- to C-terminus: DNA-directed RNA polymerase subunit beta' (1299 aa).

The Zn(2+) site is built by Cys-60, Cys-62, Cys-75, and Cys-78. A disordered region spans residues 385–405 (GRRGRPVTGPGNRPLKSLSDM). Mg(2+)-binding residues include Asp-535, Asp-537, and Asp-539. Residues Cys-886, Cys-962, Cys-969, and Cys-972 each contribute to the Zn(2+) site.

The protein belongs to the RNA polymerase beta' chain family. As to quaternary structure, the RNAP catalytic core consists of 2 alpha, 1 beta, 1 beta' and 1 omega subunit. When a sigma factor is associated with the core the holoenzyme is formed, which can initiate transcription. Requires Mg(2+) as cofactor. It depends on Zn(2+) as a cofactor.

The catalysed reaction is RNA(n) + a ribonucleoside 5'-triphosphate = RNA(n+1) + diphosphate. In terms of biological role, DNA-dependent RNA polymerase catalyzes the transcription of DNA into RNA using the four ribonucleoside triphosphates as substrates. The chain is DNA-directed RNA polymerase subunit beta' from Streptomyces avermitilis (strain ATCC 31267 / DSM 46492 / JCM 5070 / NBRC 14893 / NCIMB 12804 / NRRL 8165 / MA-4680).